The following is a 732-amino-acid chain: Cullin-3B (732 aa).

Positions 662-724 constitute a Cullin neddylation domain; the sequence is DRKPQIEAAI…RDFLERDNTD (63 aa). Residue Lys676 forms a Glycyl lysine isopeptide (Lys-Gly) (interchain with G-Cter in NEDD8) linkage.

Belongs to the cullin family. As to quaternary structure, interacts with BTB/POZ-MATH proteins BPM1 and BPM3. Post-translationally, neddylated. Deneddylated via its interaction with the COP9 signalosome (CSN) complex.

It participates in protein modification; protein ubiquitination. Component of the cullin-RING ubiquitin ligases (CRL), or CUL3-RBX1-BTB protein E3 ligase complexes which mediate the ubiquitination and subsequent proteasomal degradation of target proteins. The functional specificity of the CRL complex depends on the BTB domain-containing protein as the substrate recognition component. Involved in embryo pattern formation and endosperm development. Required for the normal division and organization of the root stem cells and columella root cap cells. Regulates primary root growth by an unknown pathway, but in an ethylene-dependent manner. Functions in distal root patterning, by an ethylene-independent mechanism. Functionally redundant with CUL3A. The polypeptide is Cullin-3B (CUL3B) (Arabidopsis thaliana (Mouse-ear cress)).